Here is a 98-residue protein sequence, read N- to C-terminus: NADH-ubiquinone oxidoreductase chain 4L (98 aa).

3 consecutive transmembrane segments (helical) span residues 1–21 (MPII…GMLF), 29–49 (SLLC…LMAL), and 58–78 (IVPI…LALL).

This sequence belongs to the complex I subunit 4L family. Core subunit of respiratory chain NADH dehydrogenase (Complex I) which is composed of 45 different subunits.

Its subcellular location is the mitochondrion inner membrane. The enzyme catalyses a ubiquinone + NADH + 5 H(+)(in) = a ubiquinol + NAD(+) + 4 H(+)(out). Core subunit of the mitochondrial membrane respiratory chain NADH dehydrogenase (Complex I) which catalyzes electron transfer from NADH through the respiratory chain, using ubiquinone as an electron acceptor. Part of the enzyme membrane arm which is embedded in the lipid bilayer and involved in proton translocation. This chain is NADH-ubiquinone oxidoreductase chain 4L (MT-ND4L), found in Trachypithecus obscurus (Dusky leaf-monkey).